Consider the following 346-residue polypeptide: Dimethyladenosine transferase 1, mitochondrial (346 aa).

A mitochondrion-targeting transit peptide spans 1 to 27 (MAASGKLSTCRLPPLPTIREIIKLLRL). Residues L38, G63, E85, K86, D111, V112, and N141 each contribute to the S-adenosyl-L-methionine site.

This sequence belongs to the class I-like SAM-binding methyltransferase superfamily. rRNA adenine N(6)-methyltransferase family. KsgA subfamily. In terms of assembly, interacts with mitochondrial RNA polymerase POLRMT. Interacts with TFAM. Bound to the maturing mtSSU until the late stages of assembly. As to expression, ubiquitously expressed.

The protein resides in the mitochondrion. It catalyses the reaction adenosine(N)/adenosine(N+1) in rRNA + 4 S-adenosyl-L-methionine = N(6)-dimethyladenosine(N)/N(6)-dimethyladenosine(N+1) in rRNA + 4 S-adenosyl-L-homocysteine + 4 H(+). Mitochondrial methyltransferase which uses S-adenosyl methionine to dimethylate two highly conserved adjacent adenosine residues (A1583 and A1584) within the loop of helix 45 at the 3-prime end of 12S rRNA, thereby regulating the assembly or stability of the small subunit of the mitochondrial ribosome. Also required for basal transcription of mitochondrial DNA, probably via its interaction with POLRMT and TFAM. Stimulates transcription independently of the methyltransferase activity. This Homo sapiens (Human) protein is Dimethyladenosine transferase 1, mitochondrial.